The sequence spans 379 residues: Acetylornithine aminotransferase (379 aa).

Pyridoxal 5'-phosphate-binding positions include Gly93–Ala94 and Phe120. Arg123 lines the N(2)-acetyl-L-ornithine pocket. Asp205 to Gln208 contributes to the pyridoxal 5'-phosphate binding site. An N6-(pyridoxal phosphate)lysine modification is found at Lys234. Ser262 contacts N(2)-acetyl-L-ornithine. Pyridoxal 5'-phosphate is bound at residue Thr263.

The protein belongs to the class-III pyridoxal-phosphate-dependent aminotransferase family. ArgD subfamily. In terms of assembly, homodimer. It depends on pyridoxal 5'-phosphate as a cofactor.

The protein resides in the cytoplasm. The enzyme catalyses N(2)-acetyl-L-ornithine + 2-oxoglutarate = N-acetyl-L-glutamate 5-semialdehyde + L-glutamate. It participates in amino-acid biosynthesis; L-arginine biosynthesis; N(2)-acetyl-L-ornithine from L-glutamate: step 4/4. The chain is Acetylornithine aminotransferase from Streptococcus mutans serotype c (strain ATCC 700610 / UA159).